A 302-amino-acid chain; its full sequence is DDRGK domain-containing protein 1 (302 aa).

The chain crosses the membrane as a helical span at residues 1 to 21; sequence MDPLLLGSVGVLVLAVTLIIW. Topologically, residues 22-302 are cytoplasmic; sequence RLLKLQWDEK…IRLETPSAAE (281 aa). Residues 101–178 are disordered; that stretch reads EYDEDGKKIG…EREEKERKEH (78 aa). A compositionally biased stretch (basic and acidic residues) spans 118–178; it reads QAKEEKRQMR…EREEKERKEH (61 aa).

This sequence belongs to the DDRGK1 family.

The protein resides in the endoplasmic reticulum membrane. In terms of biological role, substrate adapter for ufmylation, the covalent attachment of the ubiquitin-like modifier ufm-1 to substrate proteins. This Caenorhabditis elegans protein is DDRGK domain-containing protein 1.